We begin with the raw amino-acid sequence, 752 residues long: MAP/microtubule affinity-regulating kinase 4 (752 aa).

Residues 1–36 (MSSRTALAPGNDRNSDTHGTLGSGRSSDKGPSWSSR) are disordered. In terms of domain architecture, Protein kinase spans 59-310 (YRLLRTIGKG…LEQIMKDKWI (252 aa)). ATP contacts are provided by residues 65–73 (IGKGNFAKV) and Lys88. The active-site Proton acceptor is the Asp181. Thr214 bears the Phosphothreonine; by LKB1 mark. A UBA domain is found at 324–368 (EPEEDFGDTKRIEVMVGMGYTREEIKEALTNQKYNEVTATYLLLG). A disordered region spans residues 385–615 (ARVRAPSDTT…SGRPRPTTNL (231 aa)). The span at 391–406 (SDTTNGTSSSKGSSHN) shows a compositional bias: low complexity. Phosphoserine occurs at positions 423 and 543. Residues 544–553 (PSSHSLAPPS) are compositionally biased toward low complexity. Positions 703-752 (AGGPEPLSHFEVEVCQLPRPGLRGVLFRRVAGTALAFRTLVTRISNDLEL) constitute a KA1 domain.

Belongs to the protein kinase superfamily. CAMK Ser/Thr protein kinase family. SNF1 subfamily. Interacts with MAPT/TAU. Interacts with gamma-tubulin. Interacts with ODF2. Interacts with USP9X. Interacts with YWHAQ. Interacts with NLRP3; promoting NLRP3 recruitment to microtubule organizing center (MTOC). Mg(2+) serves as cofactor. Post-translationally, ubiquitinated with 'Lys-29'- and 'Lys-33'-linked polyubiquitins which appear to impede LKB1-mediated phosphorylation. Deubiquitinated by USP9X. In terms of processing, phosphorylated at Thr-214 by STK11/LKB1 in complex with STE20-related adapter-alpha (STRADA) pseudo kinase and CAB39. Phosphorylated throughout the cell cycle. As to expression, isoform 1 and isoform 2 show similar expression patterns in the central nervous system and are present in the same subsets of neurons including pyramidal and non-pyramidal neurons in the cerebral cortex and hippocampus, cerebellar Purkinje cells, and interneurons and motor neurons in the spinal cord but not in glial cells (at protein level). Isoform 2 is the major isoform in brain and cerebellum. Also expressed in spleen, liver, small intestine, colon, kidney, tongue, testis and lung. Isoform 1 and isoform 2 are expressed at similar levels in heart.

The protein localises to the cytoplasm. It localises to the cytoskeleton. Its subcellular location is the microtubule organizing center. The protein resides in the centrosome. It is found in the cilium axoneme. The protein localises to the cilium basal body. It localises to the cell projection. Its subcellular location is the dendrite. It catalyses the reaction L-seryl-[protein] + ATP = O-phospho-L-seryl-[protein] + ADP + H(+). It carries out the reaction L-threonyl-[protein] + ATP = O-phospho-L-threonyl-[protein] + ADP + H(+). Its activity is regulated as follows. Activated by phosphorylation on Thr-214. Serine/threonine-protein kinase. Phosphorylates the microtubule-associated protein MAPT/TAU. Also phosphorylates the microtubule-associated proteins MAP2 and MAP4. Involved in regulation of the microtubule network, causing reorganization of microtubules into bundles. Required for the initiation of axoneme extension during cilium assembly. Regulates the centrosomal location of ODF2 and phosphorylates ODF2 in vitro. Plays a role in cell cycle progression, specifically in the G1/S checkpoint. Reduces neuronal cell survival. Plays a role in energy homeostasis by regulating satiety and metabolic rate. Promotes adipogenesis by activating JNK1 and inhibiting the p38MAPK pathway, and triggers apoptosis by activating the JNK1 pathway. Phosphorylates mTORC1 complex member RPTOR and acts as a negative regulator of the mTORC1 complex, probably due to disruption of the interaction between phosphorylated RPTOR and the RRAGA/RRAGC heterodimer which is required for mTORC1 activation. Involved in NLRP3 positioning along microtubules by mediating NLRP3 recruitment to microtubule organizing center (MTOC) upon inflammasome activation. This is MAP/microtubule affinity-regulating kinase 4 from Mus musculus (Mouse).